A 541-amino-acid chain; its full sequence is Zinc finger protein 503 (541 aa).

The segment covering 1-18 (MSNSPLGSGSRISHFTTE) has biased composition (polar residues). 2 disordered regions span residues 1–49 (MSNS…QAGR) and 97–255 (TCSQ…SSSV). Basic and acidic residues predominate over residues 137–157 (AEDKSSFKPYSKHPDKKDQSA). Over residues 236–255 (SLSAAPSPTPASSSSSSSSV) the composition is skewed to low complexity. A C2H2-type zinc finger spans residues 411-439 (HVCNWVSATGPCDKRFSSSEELLGHLRTH). Positions 474–511 (GASPGPLTLRSPHHHPLGLSSSRYHPYSKSPLPSGGAP) are disordered.

The protein belongs to the Elbow/Noc family.

It is found in the nucleus. Its function is as follows. May function as a transcriptional repressor. In Xenopus tropicalis (Western clawed frog), this protein is Zinc finger protein 503 (znf503).